The sequence spans 635 residues: Threonine--tRNA ligase (635 aa).

One can recognise a TGS domain in the interval 1–61; sequence MINISFPDGS…EHDCKLRILT (61 aa). The interval 242–533 is catalytic; that stretch reads DHRKIGKELD…LIEEYAGKFP (292 aa). The Zn(2+) site is built by C333, H384, and H510.

The protein belongs to the class-II aminoacyl-tRNA synthetase family. Homodimer. Zn(2+) is required as a cofactor.

It localises to the cytoplasm. It carries out the reaction tRNA(Thr) + L-threonine + ATP = L-threonyl-tRNA(Thr) + AMP + diphosphate + H(+). Functionally, catalyzes the attachment of threonine to tRNA(Thr) in a two-step reaction: L-threonine is first activated by ATP to form Thr-AMP and then transferred to the acceptor end of tRNA(Thr). Also edits incorrectly charged L-seryl-tRNA(Thr). The polypeptide is Threonine--tRNA ligase (Rickettsia typhi (strain ATCC VR-144 / Wilmington)).